Here is a 432-residue protein sequence, read N- to C-terminus: Trigger factor (432 aa).

Positions 161-246 (EDRVTIDFTG…LKKVEERELP (86 aa)) constitute a PPIase FKBP-type domain.

It belongs to the FKBP-type PPIase family. Tig subfamily. In terms of assembly, homodimer and monomer. In vivo most of the ribosomes are in complex with monomeric TF. Uncomplexed TF, however, is in a monomer-dimer equilibrium with approximately two thirds of TF existing in a dimeric state.

Its subcellular location is the cytoplasm. It catalyses the reaction [protein]-peptidylproline (omega=180) = [protein]-peptidylproline (omega=0). Involved in protein export. Acts as a chaperone by maintaining the newly synthesized protein in an open conformation. Functions as a peptidyl-prolyl cis-trans isomerase. The sequence is that of Trigger factor from Escherichia fergusonii (strain ATCC 35469 / DSM 13698 / CCUG 18766 / IAM 14443 / JCM 21226 / LMG 7866 / NBRC 102419 / NCTC 12128 / CDC 0568-73).